Consider the following 328-residue polypeptide: POU domain, class 5, transcription factor 2 (328 aa).

The interval 1-25 (MAGHRPSNHFCPLPGSGGGGPRGPM) is disordered. In terms of domain architecture, POU-specific spans 118–192 (DISGILKELQ…LLKKWLKEVE (75 aa)). Residues 210 to 269 (GKWRRASRERRIGNSLEKFFQRCPKPTPQQISHIAGCLQLQKDVVRVWFYNRSKMGSRPT) constitute a DNA-binding region (homeobox).

It belongs to the POU transcription factor family. Class-5 subfamily. Expressed in skeletal and cardiac muscles, brain, heart and lung. Little or no detectable expression found in pancreas, kidney, liver or placenta.

Its subcellular location is the nucleus. Its function is as follows. Transcription factor that binds preferentially to the octamer motif (5'-ATGTTAAT-3'). May exert a regulatory function in meiotic events that are required for terminal differentiation of male germ cell. In Homo sapiens (Human), this protein is POU domain, class 5, transcription factor 2 (POU5F2).